A 479-amino-acid chain; its full sequence is Poly(A) polymerase catalytic subunit (479 aa).

Catalysis depends on residues Asp-202 and Asp-204. Residues Asp-202, Asp-204, and Asp-253 each coordinate Ca(2+).

It belongs to the poxviridae poly(A) polymerase catalytic subunit family. Heterodimer of a large (catalytic) subunit and a small (regulatory) subunit.

The enzyme catalyses RNA(n) + ATP = RNA(n)-3'-adenine ribonucleotide + diphosphate. Functionally, polymerase that creates the 3'-poly(A) tail of mRNA's. This Homo sapiens (Human) protein is Poly(A) polymerase catalytic subunit (OPG063).